We begin with the raw amino-acid sequence, 443 residues long: Exodeoxyribonuclease 7 large subunit (443 aa).

Belongs to the XseA family. In terms of assembly, heterooligomer composed of large and small subunits.

The protein localises to the cytoplasm. It carries out the reaction Exonucleolytic cleavage in either 5'- to 3'- or 3'- to 5'-direction to yield nucleoside 5'-phosphates.. Its function is as follows. Bidirectionally degrades single-stranded DNA into large acid-insoluble oligonucleotides, which are then degraded further into small acid-soluble oligonucleotides. The sequence is that of Exodeoxyribonuclease 7 large subunit from Legionella pneumophila (strain Lens).